Here is a 158-residue protein sequence, read N- to C-terminus: Large ribosomal subunit protein uL16 (158 aa).

This sequence belongs to the universal ribosomal protein uL16 family. In terms of assembly, part of the 50S ribosomal subunit.

Its function is as follows. Binds 23S rRNA and is also seen to make contacts with the A and possibly P site tRNAs. This chain is Large ribosomal subunit protein uL16, found in Parasynechococcus marenigrum (strain WH8102).